The chain runs to 485 residues: Protein nucleotidyltransferase YdiU (485 aa).

8 residues coordinate ATP: G100, G102, R103, K123, D135, G136, R189, and R196. The active-site Proton acceptor is D265. Mg(2+)-binding residues include N266 and D275. D275 contributes to the ATP binding site.

Belongs to the SELO family. The cofactor is Mg(2+). It depends on Mn(2+) as a cofactor.

The catalysed reaction is L-seryl-[protein] + ATP = 3-O-(5'-adenylyl)-L-seryl-[protein] + diphosphate. The enzyme catalyses L-threonyl-[protein] + ATP = 3-O-(5'-adenylyl)-L-threonyl-[protein] + diphosphate. It carries out the reaction L-tyrosyl-[protein] + ATP = O-(5'-adenylyl)-L-tyrosyl-[protein] + diphosphate. It catalyses the reaction L-histidyl-[protein] + UTP = N(tele)-(5'-uridylyl)-L-histidyl-[protein] + diphosphate. The catalysed reaction is L-seryl-[protein] + UTP = O-(5'-uridylyl)-L-seryl-[protein] + diphosphate. The enzyme catalyses L-tyrosyl-[protein] + UTP = O-(5'-uridylyl)-L-tyrosyl-[protein] + diphosphate. In terms of biological role, nucleotidyltransferase involved in the post-translational modification of proteins. It can catalyze the addition of adenosine monophosphate (AMP) or uridine monophosphate (UMP) to a protein, resulting in modifications known as AMPylation and UMPylation. This is Protein nucleotidyltransferase YdiU from Trichormus variabilis (strain ATCC 29413 / PCC 7937) (Anabaena variabilis).